The primary structure comprises 342 residues: Endoplasmic reticulum junction formation protein lunapark-1 (342 aa).

Topologically, residues 1-39 (MGNLFSRNKSPATELERVALSIDDLKKRLQTISSSNTNT) are cytoplasmic. Residues 13 to 34 (TELERVALSIDDLKKRLQTISS) adopt a coiled-coil conformation. Residues 40-60 (LYYYYMSIVVILSIAMAHTWL) traverse the membrane as a helical segment. Residues 61 to 68 (RFEDPQKT) lie on the Lumenal side of the membrane. The chain crosses the membrane as a helical span at residues 69 to 89 (YVACALMLGAIGIVLAGRYVI). Over 90–342 (NGFFSWRTNR…ESKTMETEFH (253 aa)) the chain is Cytoplasmic. A coiled-coil region spans residues 102-136 (QKLENAISQKTTLLDLVKETLKFKEAKEILDRYEK). Residues 161 to 191 (ADSSMFATPKQEQKRVETPTAQGPNSAMNSM) are disordered. Residues 179–191 (PTAQGPNSAMNSM) show a composition bias toward polar residues. The C4-type; plays a role in ER morphology zinc-finger motif lies at 236–261 (CSICHTHNGMSTPAEYPYISFRCFEC). Residues 278 to 342 (RPPMGPKGIQ…ESKTMETEFH (65 aa)) form a disordered region. A compositionally biased stretch (polar residues) spans 295–321 (SENTHNMMENQKPSTDLTPSASQNGSE). Residues 322-342 (KGSDSENEKVPESKTMETEFH) are compositionally biased toward basic and acidic residues.

This sequence belongs to the lunapark family. As to expression, expressed in cell bodies along the ventral cord around the pharynx and the tail both in larvae and adults. Also expressed in muscles and hypodermal cells.

The protein resides in the endoplasmic reticulum membrane. Plays a role in tubular endoplasmic reticulum network formation and maintenance. May be involved in central nervous system development. Has a presynaptic role in neurotransmission. Likely to operate in synaptogenesis by regulating vesicular transport or localization. Required for correct localization of rab-3 and snb-1. This chain is Endoplasmic reticulum junction formation protein lunapark-1 (lnp-1), found in Caenorhabditis elegans.